The chain runs to 227 residues: Nodulation protein W (227 aa).

Residues 21 to 135 form the Response regulatory domain; that stretch reads IVFVVEDDIS…ELLDAVVAAT (115 aa). The residue at position 70 (Asp70) is a 4-aspartylphosphate. An HTH luxR-type domain is found at 151-216; sequence LKSLFETLSP…DLIRMSETLG (66 aa). The segment at residues 175–194 is a DNA-binding region (H-T-H motif); that stretch reads NKQVAAELGLAEITVKIYRG.

In terms of processing, phosphorylated by NodV.

The protein localises to the cytoplasm. Member of the two-component regulatory system NodV/NodW probably involved in the regulation of the transcription of genes involved in the nodulation process. The polypeptide is Nodulation protein W (nodW) (Bradyrhizobium diazoefficiens (strain JCM 10833 / BCRC 13528 / IAM 13628 / NBRC 14792 / USDA 110)).